A 752-amino-acid chain; its full sequence is Protein ORF24 (752 aa).

It belongs to the herpesviridae UL87 family. In terms of assembly, interacts with ORF34.

In terms of biological role, plays a role in the expression of late viral mRNAs together with ORF34. The polypeptide is Protein ORF24 (ORF24) (Homo sapiens (Human)).